A 304-amino-acid polypeptide reads, in one-letter code: MGGFVKTQKTHAYFKRFQVKFKRRRQGKTDYRARIRLTNQDKNKYNTPKYRFVVRFTNKDITAQIVYATIAGDIVMAAAYSHELPRYGLEVGLTNYAAAYCTGLLLARRVLTLRGLDQEYEGNVEATGEDYYVEPADERRPFRALLDVGLIRTTTGNRVFGALKGALDGGLDIPHSDKRFAGFKKDEKQLDSDIHRKYIYGGHVADYMRSMAEEEPEKFQAHFSEYLKKGIDADGMESLYKKVHAAIRADPTMAKSTKKEPATHKRYNLKKLTYEQRKASLVERLNALNSSAGADDDDEEEDDE.

The protein belongs to the universal ribosomal protein uL18 family. In terms of assembly, component of the large ribosomal subunit (LSU).

Its subcellular location is the cytoplasm. It is found in the nucleus. Its function is as follows. Component of the ribosome, a large ribonucleoprotein complex responsible for the synthesis of proteins in the cell. The small ribosomal subunit (SSU) binds messenger RNAs (mRNAs) and translates the encoded message by selecting cognate aminoacyl-transfer RNA (tRNA) molecules. The large subunit (LSU) contains the ribosomal catalytic site termed the peptidyl transferase center (PTC), which catalyzes the formation of peptide bonds, thereby polymerizing the amino acids delivered by tRNAs into a polypeptide chain. The nascent polypeptides leave the ribosome through a tunnel in the LSU and interact with protein factors that function in enzymatic processing, targeting, and the membrane insertion of nascent chains at the exit of the ribosomal tunnel. The chain is Large ribosomal subunit protein uL18y (RPL5B) from Oryza sativa subsp. japonica (Rice).